We begin with the raw amino-acid sequence, 460 residues long: Lipase member H-B (460 aa).

The signal sequence occupies residues 1-26 (MLLSFYFNGLLLVGCLLSWGRSDTEG). N-linked (GlcNAc...) asparagine glycosylation is found at Asn-67 and Asn-75. Ser-163 acts as the Nucleophile in catalysis. Asn-177 carries N-linked (GlcNAc...) asparagine glycosylation. The active-site Charge relay system is Asp-187. Cys-242 and Cys-255 are joined by a disulfide. His-257 acts as the Charge relay system in catalysis. Intrachain disulfides connect Cys-279–Cys-290 and Cys-293–Cys-301. Residue Asn-289 is glycosylated (N-linked (GlcNAc...) asparagine). Asn-366 carries an N-linked (GlcNAc...) asparagine glycan. Residues Cys-436 and Cys-455 are joined by a disulfide bond.

It belongs to the AB hydrolase superfamily. Lipase family.

Its subcellular location is the secreted. It localises to the cell membrane. It carries out the reaction 1-hexadecanoyl-2-(9Z-octadecenoyl)-sn-glycero-3-phosphate + H2O = 2-(9Z-octadecenoyl)-sn-glycero-3-phosphate + hexadecanoate + H(+). Its function is as follows. Hydrolyzes specifically phosphatidic acid (PA) to produce 2-acyl lysophosphatidic acid (LPA; a potent bioactive lipid mediator) and fatty acid. Does not hydrolyze other phospholipids, like phosphatidylserine (PS), phosphatidylcholine (PC) and phosphatidylethanolamine (PE) or triacylglycerol (TG). The protein is Lipase member H-B (liph-b) of Xenopus laevis (African clawed frog).